The chain runs to 600 residues: MTRTPFTLSLRSTDSVFKIRQSLSTVLSHSSTKIISRGYITIPITSTIAYHRPTIRLFNMPIAAPVRTLSSSQPLKRSTSPLPAITPAQNLLRLKAHLQNLPTPLLKHVHLSKIRREDPNLFFSVMRDELTDLAPIVYTPTVGEACQKYSQIYSGPEGLYLNIEDKDRIPEILRQYASKLVTPPQILVVTDGSRILGLGDLGIGGMGISVGKLNLYVAGGGVNPHGCLPVVLDMGTNNETIRNDPLYIGLKQSRVGLEEATEFMDAFMAAASEAFPKAVIQHEDFYSEAAFDFLARYKEKYRMFNDDIEGTGSVILAGFLAAAKQASEASGKPLRDHKVVFLGGGSAAVGVAKEMMNFFMMQGLTEDEARERFWLIDTKGLITSTRADVVSGKIASHKKFFIRNDTEGKEYPSLESVIEYVQPTALVGLSTTFGAFSEFAVRRMAELNQSPIIFPLSNPTSKCELAFSDALEWTDGRVLFASGSPYPPQQFKGTLREPGQGNNFLVFPGIGFGALQAGCKRITTGMITASAIALSEALTPEEKQKGLLYPRLERIRAVSARVAAGVVKQAQEDGVDTNETLRGLDIEALTEEMNKAQWWP.

The transit peptide at 1-68 directs the protein to the mitochondrion; that stretch reads MTRTPFTLSL…NMPIAAPVRT (68 aa). Arg93 contacts fumarate. The active-site Proton donor is the Tyr138. Arg194 provides a ligand contact to (S)-malate. Arg194 serves as a coordination point for NAD(+). Lys212 acts as the Proton acceptor in catalysis. A divalent metal cation is bound by residues Glu283, Asp284, and Asp307. Positions 344 and 347 each coordinate NAD(+). Asn458 and Asn502 together coordinate (S)-malate.

This sequence belongs to the malic enzymes family. Mg(2+) serves as cofactor. Requires Mn(2+) as cofactor.

It localises to the mitochondrion matrix. Its subcellular location is the cytoplasm. The protein localises to the cytosol. The protein resides in the nucleus. The enzyme catalyses (S)-malate + NAD(+) = pyruvate + CO2 + NADH. It catalyses the reaction oxaloacetate + H(+) = pyruvate + CO2. In terms of biological role, NAD-dependent mitochondrial malic enzyme that catalyzes the oxidative decarboxylation of malate to pyruvate. This is NAD-dependent malic enzyme, mitochondrial from Cryptococcus neoformans var. grubii serotype A (strain H99 / ATCC 208821 / CBS 10515 / FGSC 9487) (Filobasidiella neoformans var. grubii).